We begin with the raw amino-acid sequence, 735 residues long: Urea active transporter (735 aa).

The Cytoplasmic portion of the chain corresponds to 1-14 (MGEFKPPLPQGAGY). A helical membrane pass occupies residues 15-35 (AIVLGLGAVFAGMMVLTTYLL). The Extracellular portion of the chain corresponds to 36-85 (KRYQKEIITAEEFTTAGRSVKTGLVAAAVVSSWIWCSTLLTSSTKEYADG). Residues 86–106 (IFGGYAYAAGACFQIIAFAIL) form a helical membrane-spanning segment. Residues 107-130 (AIKTKQMAPNAHTYLELVRTRYGK) are Cytoplasmic-facing. A helical membrane pass occupies residues 131–151 (IGHGCYLFYAIATNILVTSML). Over 152–166 (LTSGSAVFSDLTGMN) the chain is Extracellular. Residues 167-187 (TIASCFLLPVGVVVYTLFGGI) form a helical membrane-spanning segment. The Cytoplasmic portion of the chain corresponds to 188–189 (KA). A helical transmembrane segment spans residues 190 to 210 (TFLTDYMHTCVIIIIVLVFAF). Residues 211-253 (KVYATSDVLGSPGKVYDLVREAAKRHPVDGNYQGEYMTMTSKS) are Extracellular-facing. A helical membrane pass occupies residues 254–274 (AGILLIINLIGNFGTVFLDNG). Residues 275 to 295 (YWNKAISASPAASLKAYAIGG) are Cytoplasmic-facing. A helical transmembrane segment spans residues 296 to 316 (LAWFAVPSLISLTMGLACLAV). At 317–343 (ETSPNFPTYPDPLTSFQANSGLVLPAA) the chain is on the extracellular side. The helical transmembrane segment at 344 to 364 (AIAIMGKGGAVASLLMIFMAV) threads the bilayer. Residues 365–403 (TSAMSAELIAVSSVFTYDIYREYIDPRASGKKLIYTSHV) lie on the Cytoplasmic side of the membrane. A helical transmembrane segment spans residues 404-424 (ACIFFGLAMSGFSVGLYYGGI). Position 425 (Ser-425) is a topological domain, extracellular. The helical transmembrane segment at 426 to 446 (MGYIYEMMGIIISSAVLPVVL) threads the bilayer. Topologically, residues 447 to 454 (TLCSKDMN) are cytoplasmic. Residues 455 to 475 (LVAAVVSPILGTGLAIMSWLV) form a helical membrane-spanning segment. Topologically, residues 476–496 (CTKSLYKELTVDTTFMDYPML) are extracellular. Residues 497–517 (TGNLVALLSPAIFIPILTYVF) traverse the membrane as a helical segment. The Cytoplasmic segment spans residues 518 to 618 (KPQNFDWEKM…EQRELARGLK (101 aa)). The disordered stretch occupies residues 553 to 572 (ANDKEQEEETNSLVSDSEKN). Residues 619 to 639 (IAYFLCVFFALAFLVVWPMPM) traverse the membrane as a helical segment. Residues 640–650 (YGSKYIFSKKF) are Extracellular-facing. The chain crosses the membrane as a helical span at residues 651–671 (FTGWVVVMIIWLFFSAFAVCI). Residues 672 to 735 (YPLWEGRHGI…SHFGQVDEII (64 aa)) lie on the Cytoplasmic side of the membrane.

The protein belongs to the sodium:solute symporter (SSF) (TC 2.A.21) family. In terms of assembly, may polymerize.

Its subcellular location is the membrane. Functionally, required for active transport of urea. This Saccharomyces cerevisiae (strain ATCC 204508 / S288c) (Baker's yeast) protein is Urea active transporter (DUR3).